The following is a 159-amino-acid chain: MSKYSFINIHLKRRFKRLEYLSMEKTVTFLLNPLKNNKVWAVLMPDGELMDDIVSVKRAQTCMEENEQIWVNPFGGAYMWDTKVSEPYEAEFVLFKKEAVQYMCIFNLHEADLQYIDYSPISGELLFDEEELKKKLDEKTLNEFKIFMNELWGYIKEVS.

This is an uncharacterized protein from Aquifex aeolicus (strain VF5).